A 187-amino-acid chain; its full sequence is Urease accessory protein UreE (187 aa).

A disordered region spans residues R154 to H187. The span at G162–H177 shows a compositional bias: basic residues. A compositionally biased stretch (basic and acidic residues) spans H178 to H187.

Belongs to the UreE family.

It is found in the cytoplasm. Functionally, involved in urease metallocenter assembly. Binds nickel. Probably functions as a nickel donor during metallocenter assembly. This chain is Urease accessory protein UreE, found in Actinobacillus pleuropneumoniae (Haemophilus pleuropneumoniae).